Here is a 348-residue protein sequence, read N- to C-terminus: uncharacterized protein (348 aa).

The signal sequence occupies residues 1-26; that stretch reads MKKRIILLLAVIIAAAAAGVAFYVAK.

This is an uncharacterized protein from Bacillus subtilis (strain 168).